Here is a 770-residue protein sequence, read N- to C-terminus: Arf-GAP with coiled-coil, ANK repeat and PH domain-containing protein 2 (770 aa).

Positions Met1 to Arg226 constitute a BAR domain. Residues Gly266–Ala361 form the PH domain. A disordered region spans residues Ser371–Ser391. The segment covering Ser379 to Gly388 has biased composition (polar residues). Phosphoserine occurs at positions 384 and 387. The 122-residue stretch at Glu399–Leu520 folds into the Arf-GAP domain. The segment at Cys414–Cys437 adopts a C4-type zinc-finger fold. Residue Ser521 is modified to Phosphoserine. Residues Ala542 to Val572 form a disordered region. Residues Val550–Ser561 show a composition bias toward polar residues. 2 positions are modified to phosphoserine: Ser573 and Ser576. ANK repeat units lie at residues Asn632–Gln661, Gln665–Ala694, and Glu698–Met727. A Phosphotyrosine modification is found at Tyr734. Ser767 carries the phosphoserine modification.

As to quaternary structure, interacts with RAB35 (GTP-bound form); the interaction is direct and probably recruits ACAP2 to membranes. Interacts with MICALL1; the interaction is indirect through RAB35.

Its subcellular location is the endosome membrane. It localises to the cell membrane. Its activity is regulated as follows. GAP activity stimulated by phosphatidylinositol 4,5-bisphosphate (PIP2) and phosphatidic acid. Functionally, GTPase-activating protein (GAP) for ADP ribosylation factor 6 (ARF6). Doesn't show GAP activity for RAB35. The sequence is that of Arf-GAP with coiled-coil, ANK repeat and PH domain-containing protein 2 (Acap2) from Mus musculus (Mouse).